We begin with the raw amino-acid sequence, 784 residues long: Toll-like receptor 2 (784 aa).

The signal sequence occupies residues 1–24 (MLRALWLFWILVAITVLFSKRCSA). Topologically, residues 25–587 (QESLSCDASG…ARPSVLECHQ (563 aa)) are extracellular. Cysteines 30 and 36 form a disulfide. LRR repeat units follow at residues 54–77 (MKSL…ACAN), 78–101 (LQVL…SLGS), 102–125 (LEHL…PLSS), 126–150 (LKYL…NLTN), 151–175 (LQTL…GLTS), 176–199 (LNEL…SIRD), 200–223 (IHHL…ILSS), 224–250 (VRYL…VSSP), 251–278 (MKKL…YILE), 279–308 (LSEV…ELGK), 309–337 (VETV…LLEK), 338–361 (VKRI…HLKS), 362–388 (LEFL…AWPS), 389–414 (LQTL…TLKN), 415–437 (LTSL…WPEK), 438–457 (MRFL…CIPQ), 458–478 (TLEV…FLPR), 479–500 (LQEL…LFPV), and 501–524 (LLVM…SFPK). Residue asparagine 147 is glycosylated (N-linked (GlcNAc...) asparagine). Cysteine 353 and cysteine 382 are joined by a disulfide. An N-linked (GlcNAc...) asparagine glycan is attached at asparagine 414. Cysteines 432 and 454 form a disulfide. Asparagine 442 carries N-linked (GlcNAc...) asparagine glycosylation. In terms of domain architecture, LRRCT spans 525–576 (LETLEAGDNHFVCSCELLSFTMETPALAQILVDWPDSYLCDSPPRLHGHRLQ). A helical transmembrane segment spans residues 588 to 608 (AALVSGVCCALLLLILLVGAL). Topologically, residues 609–784 (CHHFHGLWYL…WVNLRTAIKS (176 aa)) are cytoplasmic. Positions 639-782 (VCYDAFVSYS…VFWVNLRTAI (144 aa)) constitute a TIR domain. A Glycyl lysine isopeptide (Lys-Gly) (interchain with G-Cter in ubiquitin) cross-link involves residue lysine 754. The ATG16L1-binding motif motif lies at 761–778 (YLEWPLDEGQQEVFWVNL).

This sequence belongs to the Toll-like receptor family. Interacts with LY96, TLR1 and TLR6 (via extracellular domain). TLR2 seems to exist in heterodimers with either TLR1 or TLR6 before stimulation by the ligand. The heterodimers form bigger oligomers in response to their corresponding ligands as well as further heterotypic associations with other receptors such as CD14 and/or CD36. Binds MYD88 (via TIR domain). Interacts with TICAM1. Interacts with CNPY3. Interacts with ATG16L1. Interacts with non-modified M.tuberculosis protein MPT83. Interacts with PPP1R11. Interacts with TIRAP. In terms of assembly, (Microbial infection) Interacts with Staphylococcus aureus protein SSL3; this interaction inhibits TLR2-mediated cytokine production. As to quaternary structure, (Microbial infection) Interacts with Toxoplasma gondii micronemal protein 1 (MIC1); the interaction promotes activation of bone marrow-derived dendritic cells and macrophages. Interacts with Toxoplasma gondii micronemal protein 4 (MIC4); the interaction promotes activation of bone marrow-derived dendritic cells and macrophages. In terms of processing, ubiquitinated at Lys-754 by PPP1R11, leading to its degradation. Deubiquitinated by USP2. Glycosylation of Asn-442 is critical for secretion of the N-terminal ectodomain of TLR2. In terms of tissue distribution, detected in a macrophage cell line, smooth muscle, lung, spleen, thymus, brain and adipose tissue. Cell surface expression detected in lung alveolar macrophages, dendritic macrophages and at lower levels in lung macrophages (at protein level).

The protein localises to the cell membrane. Its subcellular location is the cytoplasmic vesicle. The protein resides in the phagosome membrane. It is found in the membrane raft. In terms of biological role, cooperates with LY96 to mediate the innate immune response to bacterial lipoproteins and other microbial cell wall components. Cooperates with TLR1 or TLR6 to mediate the innate immune response to bacterial lipoproteins or lipopeptides. Acts via MYD88 and TRAF6, leading to NF-kappa-B activation, cytokine secretion and the inflammatory response. May also promote apoptosis in response to lipoproteins. Forms activation clusters composed of several receptors depending on the ligand, these clusters trigger signaling from the cell surface and subsequently are targeted to the Golgi in a lipid-raft dependent pathway. Forms the cluster TLR2:TLR6:CD14:CD36 in response to diacylated lipopeptides and TLR2:TLR1:CD14 in response to triacylated lipopeptides. Recognizes M.tuberculosis major T-antigen EsxA (ESAT-6) which inhibits downstream MYD88-dependent signaling. Acts as the major receptor for M.tuberculosis lipoproteins LprA, LprG, LpqH and PhoS1 (pstS1), in conjunction with TLR1 and for some but not all lipoproteins CD14 and/or CD36. The lipoproteins act as agonists to modulate antigen presenting cell functions in response to the pathogen. Recombinant MPT83 from M.tuberculosis stimulates secretion of cytokines (TNF-alpha, IL-6 and IL-12p40) by mouse macrophage cell lines in a TLR2-dependent fashion, which leads to increased host innate immunity responses against the bacterium. Lung macrophages which express low levels of TLR2 respond poorly to stimulation by M.tuberculosis LpqH. Required for normal uptake of M.tuberculosis, a process that is inhibited by M.tuberculosis LppM. Interacts with TICAM2. (Microbial infection) Mediates activation of bone marrow-derived dendritic cells and macrophages, and production of pro-inflammatory cytokines, such as IL12 (IL12B/IL12A), triggered by Toxoplasma gondii micronemal protein 4 (MIC4) and micronemal protein 1 (MIC1). The sequence is that of Toll-like receptor 2 (Tlr2) from Mus musculus (Mouse).